The primary structure comprises 344 residues: Phosphoribosylformylglycinamidine cyclo-ligase (344 aa).

The protein belongs to the AIR synthase family.

The protein resides in the cytoplasm. It carries out the reaction 2-formamido-N(1)-(5-O-phospho-beta-D-ribosyl)acetamidine + ATP = 5-amino-1-(5-phospho-beta-D-ribosyl)imidazole + ADP + phosphate + H(+). The protein operates within purine metabolism; IMP biosynthesis via de novo pathway; 5-amino-1-(5-phospho-D-ribosyl)imidazole from N(2)-formyl-N(1)-(5-phospho-D-ribosyl)glycinamide: step 2/2. The chain is Phosphoribosylformylglycinamidine cyclo-ligase from Haemophilus influenzae (strain PittEE).